The chain runs to 162 residues: Phosphopantetheine adenylyltransferase (162 aa).

A substrate-binding site is contributed by S11. Residues 11–12 and H19 contribute to the ATP site; that span reads SF. The substrate site is built by K43, V76, and R90. Residues 91 to 93, E101, and 126 to 132 contribute to the ATP site; these read GLR and HLYISSS.

The protein belongs to the bacterial CoaD family. Homohexamer. Requires Mg(2+) as cofactor.

The protein localises to the cytoplasm. The enzyme catalyses (R)-4'-phosphopantetheine + ATP + H(+) = 3'-dephospho-CoA + diphosphate. It functions in the pathway cofactor biosynthesis; coenzyme A biosynthesis; CoA from (R)-pantothenate: step 4/5. In terms of biological role, reversibly transfers an adenylyl group from ATP to 4'-phosphopantetheine, yielding dephospho-CoA (dPCoA) and pyrophosphate. This is Phosphopantetheine adenylyltransferase from Streptococcus pneumoniae (strain ATCC 700669 / Spain 23F-1).